The sequence spans 309 residues: Probable WRKY transcription factor 26 (309 aa).

The interval 1-24 is disordered; it reads MGSFDRQRAVPKFKTATPSPLPLS. A DNA-binding region (WRKY 1) is located at residues 111–176; that stretch reads SSNKTSDDGY…YKGSHNHPKP (66 aa). Positions 142, 147, 171, and 173 each coordinate Zn(2+). Residues 167–210 are disordered; sequence YKGSHNHPKPQSTKRSSSTAIAAHQNSSNGDGKDIGEDETEAKR. The span at 175 to 196 shows a compositional bias: polar residues; that stretch reads KPQSTKRSSSTAIAAHQNSSNG. A compositionally biased stretch (basic and acidic residues) spans 197 to 210; sequence DGKDIGEDETEAKR. The WRKY 2 DNA-binding region spans 228 to 293; it reads SDIDILDDGY…YEGKHKHQIP (66 aa). Zn(2+) is bound by residues Cys-259, Cys-264, His-288, and His-290.

This sequence belongs to the WRKY group I family. As to quaternary structure, interacts with VQ10.

The protein resides in the nucleus. Functionally, transcription factor. Interacts specifically with the W box (5'-(T)TGAC[CT]-3'), a frequently occurring elicitor-responsive cis-acting element. Functions with WRKY25 and WRKY33 as positive regulator of plant thermotolerance by partially participating in ethylene-response signal transduction pathway. In Arabidopsis thaliana (Mouse-ear cress), this protein is Probable WRKY transcription factor 26 (WRKY26).